The primary structure comprises 281 residues: Pantothenate synthetase (281 aa).

30-37 is an ATP binding site; the sequence is MGALHAGH. His37 (proton donor) is an active-site residue. Residue Gln64 participates in (R)-pantoate binding. Gln64 contacts beta-alanine. 150–153 contributes to the ATP binding site; sequence GKKD. Position 156 (Gln156) interacts with (R)-pantoate. Residues Val179 and 187–190 each bind ATP; that span reads YSSR.

It belongs to the pantothenate synthetase family. In terms of assembly, homodimer.

Its subcellular location is the cytoplasm. It catalyses the reaction (R)-pantoate + beta-alanine + ATP = (R)-pantothenate + AMP + diphosphate + H(+). It functions in the pathway cofactor biosynthesis; (R)-pantothenate biosynthesis; (R)-pantothenate from (R)-pantoate and beta-alanine: step 1/1. Catalyzes the condensation of pantoate with beta-alanine in an ATP-dependent reaction via a pantoyl-adenylate intermediate. This chain is Pantothenate synthetase, found in Akkermansia muciniphila (strain ATCC BAA-835 / DSM 22959 / JCM 33894 / BCRC 81048 / CCUG 64013 / CIP 107961 / Muc).